A 351-amino-acid chain; its full sequence is UDP-glucose 4-epimerase 5 (351 aa).

NAD(+) is bound by residues 13 to 15 (GYI), 34 to 38 (DNLDN), 64 to 65 (DL), Phe-86, and Lys-90. 130 to 132 (SAT) provides a ligand contact to substrate. Catalysis depends on Tyr-154, which acts as the Proton acceptor. Lys-158 and Tyr-182 together coordinate NAD(+). Residues 182–184 (YFN), 203–205 (NNL), 221–223 (TVF), Arg-236, and 298–301 (RPGD) contribute to the substrate site.

The protein belongs to the NAD(P)-dependent epimerase/dehydratase family. As to quaternary structure, forms homodimers and heterodimers. The cofactor is NAD(+). In terms of tissue distribution, widely expressed.

It catalyses the reaction UDP-alpha-D-glucose = UDP-alpha-D-galactose. It participates in carbohydrate metabolism; galactose metabolism. Its activity is regulated as follows. Enhanced activity by NaCl. Inhibited by UDP. Catalyzes the interconversion between UDP-glucose and UDP-galactose. The polypeptide is UDP-glucose 4-epimerase 5 (Arabidopsis thaliana (Mouse-ear cress)).